The primary structure comprises 400 residues: DNA polymerase IV (400 aa).

The region spanning 5-187 is the UmuC domain; that stretch reads IFLVDMNAFF…LPVEFMNGIG (183 aa). The Mg(2+) site is built by aspartate 9 and aspartate 105. The active site involves glutamate 106.

The protein belongs to the DNA polymerase type-Y family. In terms of assembly, monomer. Requires Mg(2+) as cofactor.

It localises to the cytoplasm. It carries out the reaction DNA(n) + a 2'-deoxyribonucleoside 5'-triphosphate = DNA(n+1) + diphosphate. In terms of biological role, poorly processive, error-prone DNA polymerase involved in untargeted mutagenesis. Copies undamaged DNA at stalled replication forks, which arise in vivo from mismatched or misaligned primer ends. These misaligned primers can be extended by PolIV. Exhibits no 3'-5' exonuclease (proofreading) activity. May be involved in translesional synthesis, in conjunction with the beta clamp from PolIII. The sequence is that of DNA polymerase IV from Clostridium kluyveri (strain ATCC 8527 / DSM 555 / NBRC 12016 / NCIMB 10680 / K1).